A 211-amino-acid chain; its full sequence is ATP-dependent Clp protease proteolytic subunit (211 aa).

Catalysis depends on serine 106, which acts as the Nucleophile. The active site involves histidine 131.

The protein belongs to the peptidase S14 family. Fourteen ClpP subunits assemble into 2 heptameric rings which stack back to back to give a disk-like structure with a central cavity, resembling the structure of eukaryotic proteasomes.

The protein localises to the cytoplasm. It catalyses the reaction Hydrolysis of proteins to small peptides in the presence of ATP and magnesium. alpha-casein is the usual test substrate. In the absence of ATP, only oligopeptides shorter than five residues are hydrolyzed (such as succinyl-Leu-Tyr-|-NHMec, and Leu-Tyr-Leu-|-Tyr-Trp, in which cleavage of the -Tyr-|-Leu- and -Tyr-|-Trp bonds also occurs).. Functionally, cleaves peptides in various proteins in a process that requires ATP hydrolysis. Has a chymotrypsin-like activity. Plays a major role in the degradation of misfolded proteins. In Rhodopseudomonas palustris (strain BisA53), this protein is ATP-dependent Clp protease proteolytic subunit.